The chain runs to 354 residues: Hyaluronan and proteoglycan link protein 1 (354 aa).

Positions Met-1 to Leu-9 are excised as a propeptide. Residues Pro-38–Val-152 form the Ig-like V-type domain. Asn-56 is a glycosylation site (N-linked (GlcNAc...) asparagine). 5 disulfides stabilise this stretch: Cys-61–Cys-139, Cys-181–Cys-252, Cys-205–Cys-226, Cys-279–Cys-349, and Cys-304–Cys-325. Link domains are found at residues Val-159–Thr-254 and Gly-259–Arg-351.

Belongs to the HAPLN family.

It localises to the secreted. It is found in the extracellular space. The protein resides in the extracellular matrix. Functionally, stabilizes the aggregates of proteoglycan monomers with hyaluronic acid in the extracellular cartilage matrix. The chain is Hyaluronan and proteoglycan link protein 1 (Hapln1) from Rattus norvegicus (Rat).